Reading from the N-terminus, the 224-residue chain is Inner membrane-spanning protein YciB (224 aa).

6 helical membrane passes run 20 to 40, 61 to 81, 86 to 106, 123 to 143, 156 to 176, and 187 to 207; these read GVNPVLKLVLELGPLLVFFFA, IFVATGLFMAATAIALIASWL, LPIMPMVSGVVVFIFGALTLY, LFGGVLLGGLYFGRSLLGYVF, KLTFRWGLFFLFLAVVNEVVW, and FKVWGIMPITLLFTFSQMPLI.

This sequence belongs to the YciB family.

It is found in the cell inner membrane. In terms of biological role, plays a role in cell envelope biogenesis, maintenance of cell envelope integrity and membrane homeostasis. The protein is Inner membrane-spanning protein YciB of Mesorhizobium japonicum (strain LMG 29417 / CECT 9101 / MAFF 303099) (Mesorhizobium loti (strain MAFF 303099)).